Consider the following 231-residue polypeptide: Thiamine import ATP-binding protein ThiQ (231 aa).

The region spanning 2 to 230 (LHLDRLLIRQ…PPPALRAYLG (229 aa)) is the ABC transporter domain. 32 to 39 (GPSGGGKS) serves as a coordination point for ATP.

This sequence belongs to the ABC transporter superfamily. Thiamine importer (TC 3.A.1.19.1) family. In terms of assembly, the complex is composed of two ATP-binding proteins (ThiQ), two transmembrane proteins (ThiP) and a solute-binding protein (ThiB).

It is found in the cell inner membrane. It carries out the reaction thiamine(out) + ATP + H2O = thiamine(in) + ADP + phosphate + H(+). In terms of biological role, part of the ABC transporter complex ThiBPQ involved in thiamine import. Responsible for energy coupling to the transport system. In Cereibacter sphaeroides (strain ATCC 17023 / DSM 158 / JCM 6121 / CCUG 31486 / LMG 2827 / NBRC 12203 / NCIMB 8253 / ATH 2.4.1.) (Rhodobacter sphaeroides), this protein is Thiamine import ATP-binding protein ThiQ.